The chain runs to 120 residues: NAD(P)H-quinone oxidoreductase subunit 3, chloroplastic (120 aa).

Helical transmembrane passes span 9-29 (IFWA…TISG), 64-84 (MFAL…PWAM), and 88-108 (VLGI…IVGS).

The protein belongs to the complex I subunit 3 family. In terms of assembly, NDH is composed of at least 16 different subunits, 5 of which are encoded in the nucleus.

The protein resides in the plastid. It is found in the chloroplast thylakoid membrane. The enzyme catalyses a plastoquinone + NADH + (n+1) H(+)(in) = a plastoquinol + NAD(+) + n H(+)(out). The catalysed reaction is a plastoquinone + NADPH + (n+1) H(+)(in) = a plastoquinol + NADP(+) + n H(+)(out). Functionally, NDH shuttles electrons from NAD(P)H:plastoquinone, via FMN and iron-sulfur (Fe-S) centers, to quinones in the photosynthetic chain and possibly in a chloroplast respiratory chain. The immediate electron acceptor for the enzyme in this species is believed to be plastoquinone. Couples the redox reaction to proton translocation, and thus conserves the redox energy in a proton gradient. The sequence is that of NAD(P)H-quinone oxidoreductase subunit 3, chloroplastic from Lotus japonicus (Lotus corniculatus var. japonicus).